The sequence spans 91 residues: DNA-directed RNA polymerase subunit omega (91 aa).

This sequence belongs to the RNA polymerase subunit omega family. The RNAP catalytic core consists of 2 alpha, 1 beta, 1 beta' and 1 omega subunit. When a sigma factor is associated with the core the holoenzyme is formed, which can initiate transcription.

It catalyses the reaction RNA(n) + a ribonucleoside 5'-triphosphate = RNA(n+1) + diphosphate. Its function is as follows. Promotes RNA polymerase assembly. Latches the N- and C-terminal regions of the beta' subunit thereby facilitating its interaction with the beta and alpha subunits. This Sodalis glossinidius (strain morsitans) protein is DNA-directed RNA polymerase subunit omega.